The sequence spans 320 residues: Protein LATERAL ROOT PRIMORDIUM 1 (320 aa).

Residues 90 to 110 (QTTVGTSSNNSGSGSGASGTA) form a disordered region. Zn(2+)-binding residues include C112, C115, C123, C128, C132, and C139. Positions 112-139 (CQDCGNQAKKECKQRRCRTCCKSRGFDC) form a DNA-binding region, zn(2)-C6 fungal-type; degenerate. The interval 150-223 (AARRRERQVM…QDGGGSREAW (74 aa)) is disordered. Over residues 168–177 (GSSLSTSSGT) the composition is skewed to low complexity. The span at 193–214 (ATSHTSTSNTPPQSFETSSSRQ) shows a compositional bias: polar residues. A Required for homo- and heterodimerization motif is present at residues 256-259 (IGGH).

This sequence belongs to the SHI protein family. Homodimer. Restricted to lateral root primordia.

Its subcellular location is the nucleus. Transcription activator that binds DNA on 5'-ACTCTAC-3' and promotes auxin homeostasis-regulating gene expression (e.g. YUC genes), as well as genes affecting stamen development, cell expansion and timing of flowering. Synergistically with other SHI-related proteins, regulates gynoecium, stamen and leaf development in a dose-dependent manner, controlling apical-basal patterning. Promotes style and stigma formation, and influence vascular development during gynoecium development. May also have a role in the formation and/or maintenance of the shoot apical meristem (SAM). Modulates root growth. The protein is Protein LATERAL ROOT PRIMORDIUM 1 (LRP1) of Arabidopsis thaliana (Mouse-ear cress).